A 593-amino-acid polypeptide reads, in one-letter code: Copine-5 (593 aa).

The C2 1 domain occupies 2 to 134 (EQPEDMASLS…SPGSRLEKPL (133 aa)). Phosphoserine is present on Ser-19. 7 residues coordinate Ca(2+): Asp-38, Asp-44, Asp-98, Asp-100, Ser-103, Lys-108, and Asp-110. Ser-103 carries the post-translational modification Phosphoserine. Residue Ser-140 is modified to Phosphoserine. The region spanning 161–284 (KCGTIILSAE…ARGQSQFNIY (124 aa)) is the C2 2 domain. The Ca(2+) site is built by Asp-192, Asp-198, Asp-254, Asp-256, and Asp-262. One can recognise a VWFA domain in the interval 328-554 (NFTVAIDFTA…DVLAEIPDQL (227 aa)). A disordered region spans residues 562-593 (GIRPRPPPAAPTHSPSQSPARTPPASPLHTHI). Low complexity predominate over residues 572–581 (PTHSPSQSPA).

This sequence belongs to the copine family. Requires Ca(2+) as cofactor. Expressed in the brain, heart, stomach, spleen, lymph node and testis. Expressed in melanocytes.

The protein localises to the perikaryon. The protein resides in the cell projection. Its function is as follows. Probable calcium-dependent phospholipid-binding protein that may play a role in calcium-mediated intracellular processes. Plays a role in dendrite formation by melanocytes. This chain is Copine-5, found in Homo sapiens (Human).